A 98-amino-acid chain; its full sequence is NADH-ubiquinone oxidoreductase chain 4L (98 aa).

A run of 3 helical transmembrane segments spans residues 1–21, 30–50, and 61–81; these read MSMVYINIFLAFTLSFMGLLI, LLCLEGMMLSLFVMMTVTILT, and IILLVFAACEAALGLSLLVMI.

It belongs to the complex I subunit 4L family. In terms of assembly, core subunit of respiratory chain NADH dehydrogenase (Complex I) which is composed of 45 different subunits.

It is found in the mitochondrion inner membrane. It carries out the reaction a ubiquinone + NADH + 5 H(+)(in) = a ubiquinol + NAD(+) + 4 H(+)(out). Core subunit of the mitochondrial membrane respiratory chain NADH dehydrogenase (Complex I) which catalyzes electron transfer from NADH through the respiratory chain, using ubiquinone as an electron acceptor. Part of the enzyme membrane arm which is embedded in the lipid bilayer and involved in proton translocation. This Gulo gulo (Wolverine) protein is NADH-ubiquinone oxidoreductase chain 4L (MT-ND4L).